The sequence spans 59 residues: Potassium channel toxin alpha-KTx 3.5 (59 aa).

The N-terminal stretch at 1–22 (MKVFSAVLIILFVCSMIIGINA) is a signal peptide. 3 cysteine pairs are disulfide-bonded: Cys29-Cys49, Cys35-Cys54, and Cys39-Cys56. The interval 47 to 54 (GKCMNGKC) is interaction with Ca(2+)-activated K(+) channels.

Belongs to the short scorpion toxin superfamily. Potassium channel inhibitor family. Alpha-KTx 03 subfamily. Expressed by the venom gland.

Its subcellular location is the secreted. In terms of biological role, has also been shown to inhibit with high potency Kv1.3/KCNA3 and with low potency Kv1.1/KCNA1 and Kv1.2/KCNA2 voltage-gated potassium channels. Also binds and inhibits the molluscan calcium-activated potassium channels KCa (Kd=135 nM). In Androctonus australis (Sahara scorpion), this protein is Potassium channel toxin alpha-KTx 3.5 (KTX2).